The sequence spans 88 residues: Large ribosomal subunit protein bL31B (88 aa).

This sequence belongs to the bacterial ribosomal protein bL31 family. Type B subfamily. Part of the 50S ribosomal subunit.

This is Large ribosomal subunit protein bL31B from Corynebacterium efficiens (strain DSM 44549 / YS-314 / AJ 12310 / JCM 11189 / NBRC 100395).